A 170-amino-acid chain; its full sequence is Protein SprT (170 aa).

Residues 25-165 form the SprT-like domain; sequence SEQFFDRTFA…QYCKGRLEPV (141 aa). H78 is a Zn(2+) binding site. Residue E79 is part of the active site. A Zn(2+)-binding site is contributed by H82.

This sequence belongs to the SprT family. Zn(2+) serves as cofactor.

Its subcellular location is the cytoplasm. The chain is Protein SprT from Actinobacillus succinogenes (strain ATCC 55618 / DSM 22257 / CCUG 43843 / 130Z).